A 574-amino-acid polypeptide reads, in one-letter code: Thiol:disulfide interchange protein DsbD (574 aa).

The signal sequence occupies residues 1-19 (MAHRILTLILLFCSAHASA). Cys122 and Cys128 are disulfide-bonded. The segment at 147–169 (VKANAATPSAATGEQTRVNSDSP) is disordered. Polar residues predominate over residues 152–169 (ATPSAATGEQTRVNSDSP). Transmembrane regions (helical) follow at residues 173–193 (LPFS…TPCV), 218–238 (LLAF…GLVV), 253–273 (WVLV…FGLF), 306–326 (IAGL…LLYI), 333–353 (WLGG…LILV), 367–387 (WMEQ…VFLL), and 399–419 (LWSV…LNAT). A disulfide bridge links Cys192 with Cys314. The 145-residue stretch at 430-574 (LLGAAMICAR…FATHLHNRLR (145 aa)) folds into the Thioredoxin domain. Cys489 and Cys492 are oxidised to a cystine.

The protein belongs to the thioredoxin family. DsbD subfamily.

The protein resides in the cell inner membrane. The catalysed reaction is [protein]-dithiol + NAD(+) = [protein]-disulfide + NADH + H(+). It catalyses the reaction [protein]-dithiol + NADP(+) = [protein]-disulfide + NADPH + H(+). Required to facilitate the formation of correct disulfide bonds in some periplasmic proteins and for the assembly of the periplasmic c-type cytochromes. Acts by transferring electrons from cytoplasmic thioredoxin to the periplasm. This transfer involves a cascade of disulfide bond formation and reduction steps. The sequence is that of Thiol:disulfide interchange protein DsbD from Cronobacter sakazakii (strain ATCC BAA-894) (Enterobacter sakazakii).